Consider the following 362-residue polypeptide: Peptide chain release factor 1 (362 aa).

The residue at position 235 (glutamine 235) is an N5-methylglutamine.

Belongs to the prokaryotic/mitochondrial release factor family. In terms of processing, methylated by PrmC. Methylation increases the termination efficiency of RF1.

The protein localises to the cytoplasm. Peptide chain release factor 1 directs the termination of translation in response to the peptide chain termination codons UAG and UAA. The chain is Peptide chain release factor 1 from Buchnera aphidicola subsp. Baizongia pistaciae (strain Bp).